Here is an 877-residue protein sequence, read N- to C-terminus: TSET complex member tstB (877 aa).

2 disordered regions span residues 398–437 and 522–557; these read HLHH…SGSS and TGLP…SNSI. Low complexity-rich tracts occupy residues 412–437 and 529–556; these read GSVP…SGSS and SNNN…SSNS.

In terms of assembly, component of the TSET complex, a heterohexamer composed of tstA, tstB, tstC, tstD, tstE and tstF, which may act in plasma membrane turnover. tstA, tstB, tstC and tstD are likely to be the core complex members with tstE and tstF acting as associated scaffold proteins.

The polypeptide is TSET complex member tstB (Dictyostelium discoideum (Social amoeba)).